A 212-amino-acid polypeptide reads, in one-letter code: Nitrogen regulatory protein P-II homolog (212 aa).

3 stretches are compositionally biased toward low complexity: residues 1-12, 32-46, and 63-74; these read MSSPATAAAAAA, TTTT…SRSR, and PPTAARAQSAAA. Residues 1–68 constitute a chloroplast transit peptide; that stretch reads MSSPATAAAA…PRRLPPTAAR (68 aa). Residues 1–74 form a disordered region; it reads MSSPATAAAA…TAARAQSAAA (74 aa). Residues 117 to 121 and 170 to 173 contribute to the ATP site; these read GFGAQ and GDGK. Glycine 119 lines the Mg(2+) pocket.

This sequence belongs to the P(II) protein family. As to quaternary structure, homodimer.

The protein localises to the plastid. It is found in the chloroplast. Participates in sensing carbon and organic nitrogen status and regulates some steps of primary carbon and nitrogen metabolism. The sequence is that of Nitrogen regulatory protein P-II homolog (GLB) from Oryza sativa subsp. japonica (Rice).